The primary structure comprises 380 residues: Tryptophan--tRNA ligase 2 (380 aa).

A 'HIGH' region motif is present at residues 74-82 (PSGPMHLGH). The 'KMSKS' region motif lies at 249-253 (KMSSS).

This sequence belongs to the class-I aminoacyl-tRNA synthetase family.

Its subcellular location is the cytoplasm. The enzyme catalyses tRNA(Trp) + L-tryptophan + ATP = L-tryptophyl-tRNA(Trp) + AMP + diphosphate + H(+). In Halobacterium salinarum (strain ATCC 700922 / JCM 11081 / NRC-1) (Halobacterium halobium), this protein is Tryptophan--tRNA ligase 2.